An 89-amino-acid chain; its full sequence is UPF0298 protein GTNG_0961 (89 aa).

It belongs to the UPF0298 family.

The protein localises to the cytoplasm. This chain is UPF0298 protein GTNG_0961, found in Geobacillus thermodenitrificans (strain NG80-2).